The following is a 122-amino-acid chain: Large ribosomal subunit protein uL14 (122 aa).

Belongs to the universal ribosomal protein uL14 family. In terms of assembly, part of the 50S ribosomal subunit. Forms a cluster with proteins L3 and L19. In the 70S ribosome, L14 and L19 interact and together make contacts with the 16S rRNA in bridges B5 and B8.

Its function is as follows. Binds to 23S rRNA. Forms part of two intersubunit bridges in the 70S ribosome. The sequence is that of Large ribosomal subunit protein uL14 from Clavibacter michiganensis subsp. michiganensis (strain NCPPB 382).